Reading from the N-terminus, the 407-residue chain is Putative colanic acid biosynthesis glycosyl transferase WcaI (407 aa).

The protein operates within slime biogenesis; slime polysaccharide biosynthesis. The sequence is that of Putative colanic acid biosynthesis glycosyl transferase WcaI (wcaI) from Escherichia coli (strain K12).